Consider the following 494-residue polypeptide: Cytochrome P450 2A6 (494 aa).

Substrate contacts are provided by Phe107 and Asn297. Cys439 provides a ligand contact to heme.

The protein belongs to the cytochrome P450 family. Heme is required as a cofactor. Liver.

The protein localises to the endoplasmic reticulum membrane. The protein resides in the microsome membrane. The enzyme catalyses 1,4-cineole + reduced [NADPH--hemoprotein reductase] + O2 = 2-exo-hydroxy-1,4-cineole + oxidized [NADPH--hemoprotein reductase] + H2O + H(+). In terms of biological role, exhibits a high coumarin 7-hydroxylase activity. Can act in the hydroxylation of the anti-cancer drugs cyclophosphamide and ifosphamide. Competent in the metabolic activation of aflatoxin B1. Constitutes the major nicotine C-oxidase. Acts as a 1,4-cineole 2-exo-monooxygenase. Possesses low phenacetin O-deethylation activity. In Homo sapiens (Human), this protein is Cytochrome P450 2A6 (CYP2A6).